The following is a 348-amino-acid chain: MKIIQEIPEKNIIKLIPENLDDLWHLSNIIQPYNAIYAVTERRTEDKGDKLRADRGTKRRVFLGIKAEKINFHEDFNRLRVSGKIIHAPDDIPIGSYHTIDIEPLLQVSVQKNWKKWDLVRLKEAEDSSKKPKVVVVILDDSEADIFLVREFGIKELVSIKSGVSKKLDYKQNEQAKFSYYSDIINSISEFEGKILFAGPGFGKNNIQNYISEKHKDLAPNVVVESANHTGKSGLSEILKSGIIDKIYGEARISKETQVIEKLLEEISKKGLAAYGIESVNNAMNYSAIDTLLLTDEYLRRNRRNIEELMNSVENINGNVLIISTEHDAGKQLKALGGISALLRFPIE.

Belongs to the eukaryotic release factor 1 family. Pelota subfamily. In terms of assembly, monomer. A divalent metal cation serves as cofactor.

The protein resides in the cytoplasm. May function in recognizing stalled ribosomes, interact with stem-loop structures in stalled mRNA molecules, and effect endonucleolytic cleavage of the mRNA. May play a role in the release non-functional ribosomes and degradation of damaged mRNAs. Has endoribonuclease activity. The sequence is that of Protein pelota homolog from Methanococcus maripaludis (strain C5 / ATCC BAA-1333).